The chain runs to 189 residues: Probable nicotinate-nucleotide adenylyltransferase (189 aa).

This sequence belongs to the NadD family.

The catalysed reaction is nicotinate beta-D-ribonucleotide + ATP + H(+) = deamido-NAD(+) + diphosphate. Its pathway is cofactor biosynthesis; NAD(+) biosynthesis; deamido-NAD(+) from nicotinate D-ribonucleotide: step 1/1. Its function is as follows. Catalyzes the reversible adenylation of nicotinate mononucleotide (NaMN) to nicotinic acid adenine dinucleotide (NaAD). The protein is Probable nicotinate-nucleotide adenylyltransferase of Staphylococcus aureus (strain bovine RF122 / ET3-1).